Reading from the N-terminus, the 246-residue chain is ATP synthase subunit a (246 aa).

Positions 1–3 are cleaved as a propeptide — removed in mature form; the sequence is MIY. A run of 7 helical transmembrane segments spans residues 25 to 45, 51 to 71, 79 to 99, 112 to 132, 138 to 158, 178 to 198, and 203 to 223; these read VNNYVMYVALVVTLMYSSVFL, LGFNRWGVALLAVYDTILNMV, GGMYFPFMFTLFTFMLVANLV, LVAIVSFSLSLWFGCVLMGLS, FFALFVPGGTPLALVPVLVLI, VLSGHLLMLILGTLMFNLMGS, and FMGGFMPVMGVIAIVVTEFAI.

It belongs to the ATPase A chain family. F-type ATPases have 2 components, CF(1) - the catalytic core - and CF(0) - the membrane proton channel. CF(1) has five subunits: alpha(3), beta(3), gamma(1), delta(1), epsilon(1). CF(0) has three main subunits: a, b and c.

Its subcellular location is the mitochondrion inner membrane. Functionally, mitochondrial membrane ATP synthase (F(1)F(0) ATP synthase or Complex V) produces ATP from ADP in the presence of a proton gradient across the membrane which is generated by electron transport complexes of the respiratory chain. F-type ATPases consist of two structural domains, F(1) - containing the extramembraneous catalytic core and F(0) - containing the membrane proton channel, linked together by a central stalk and a peripheral stalk. During catalysis, ATP synthesis in the catalytic domain of F(1) is coupled via a rotary mechanism of the central stalk subunits to proton translocation. Key component of the proton channel; it may play a direct role in the translocation of protons across the membrane. The polypeptide is ATP synthase subunit a (ATP6) (Debaryomyces hansenii (strain ATCC 36239 / CBS 767 / BCRC 21394 / JCM 1990 / NBRC 0083 / IGC 2968) (Yeast)).